We begin with the raw amino-acid sequence, 723 residues long: DNA-binding protein RFX2 (723 aa).

The interval 1–46 (MQNSEGGADSPASVALRPSAAAPPVPASPQRVLVQAASSNPKGAQM) is disordered. Positions 10-20 (SPASVALRPSA) are enriched in low complexity. Residue Ser28 is modified to Phosphoserine. A DNA-binding region (RFX-type winged-helix) is located at residues 199–274 (HLQWLLDNYE…YHYYGIRLKP (76 aa)). The segment at 292 to 332 (QQPMHQKPRYRPAQKTDSLGDSGSHSGLHSTPEQTMAVQSQ) is disordered. The segment covering 308–321 (DSLGDSGSHSGLHS) has biased composition (low complexity). The segment covering 322–332 (TPEQTMAVQSQ) has biased composition (polar residues). At Ser416 the chain carries Phosphoserine. The segment at 688 to 723 (MGDEQRGSEAGPDARSLGEPLVKRERSDPNHSLQGI) is disordered.

This sequence belongs to the RFX family. In terms of assembly, homodimer; probably only forms homodimers in testis. Heterodimer; heterodimerizes with RFX1 and RFX3.

It is found in the nucleus. It localises to the cytoplasm. Functionally, transcription factor that acts as a key regulator of spermatogenesis. Acts by regulating expression of genes required for the haploid phase during spermiogenesis, such as genes required for cilium assembly and function. Recognizes and binds the X-box, a regulatory motif with DNA sequence 5'-GTNRCC(0-3N)RGYAAC-3' present on promoters. Probably activates transcription of the testis-specific histone gene H1-6. The chain is DNA-binding protein RFX2 (RFX2) from Homo sapiens (Human).